Here is a 484-residue protein sequence, read N- to C-terminus: ATP synthase subunit beta (484 aa).

169–176 (GGAGVGKT) is a binding site for ATP.

This sequence belongs to the ATPase alpha/beta chains family. In terms of assembly, F-type ATPases have 2 components, CF(1) - the catalytic core - and CF(0) - the membrane proton channel. CF(1) has five subunits: alpha(3), beta(3), gamma(1), delta(1), epsilon(1). CF(0) has three main subunits: a(1), b(2) and c(9-12). The alpha and beta chains form an alternating ring which encloses part of the gamma chain. CF(1) is attached to CF(0) by a central stalk formed by the gamma and epsilon chains, while a peripheral stalk is formed by the delta and b chains.

It is found in the cell membrane. The enzyme catalyses ATP + H2O + 4 H(+)(in) = ADP + phosphate + 5 H(+)(out). Functionally, produces ATP from ADP in the presence of a proton gradient across the membrane. The catalytic sites are hosted primarily by the beta subunits. The polypeptide is ATP synthase subunit beta (Nocardioides sp. (strain ATCC BAA-499 / JS614)).